A 647-amino-acid chain; its full sequence is Threonine--tRNA ligase (647 aa).

Residues 1–61 form the TGS domain; sequence MIKITFPDGA…EEDGSIEIVT (61 aa). The catalytic stretch occupies residues 240–538; the sequence is DHRKLGKELD…LIETYKGAFP (299 aa). The Zn(2+) site is built by C334, H385, and H515.

This sequence belongs to the class-II aminoacyl-tRNA synthetase family. As to quaternary structure, homodimer. Requires Zn(2+) as cofactor.

Its subcellular location is the cytoplasm. The catalysed reaction is tRNA(Thr) + L-threonine + ATP = L-threonyl-tRNA(Thr) + AMP + diphosphate + H(+). Functionally, catalyzes the attachment of threonine to tRNA(Thr) in a two-step reaction: L-threonine is first activated by ATP to form Thr-AMP and then transferred to the acceptor end of tRNA(Thr). Also edits incorrectly charged L-seryl-tRNA(Thr). In Streptococcus agalactiae serotype V (strain ATCC BAA-611 / 2603 V/R), this protein is Threonine--tRNA ligase.